The chain runs to 504 residues: Maturase K (504 aa).

This sequence belongs to the intron maturase 2 family. MatK subfamily.

The protein localises to the plastid. It is found in the chloroplast. Usually encoded in the trnK tRNA gene intron. Probably assists in splicing its own and other chloroplast group II introns. The polypeptide is Maturase K (Matthiola incana (Common stock)).